We begin with the raw amino-acid sequence, 89 residues long: Small ribosomal subunit protein uS17 (89 aa).

The protein belongs to the universal ribosomal protein uS17 family. As to quaternary structure, part of the 30S ribosomal subunit.

Functionally, one of the primary rRNA binding proteins, it binds specifically to the 5'-end of 16S ribosomal RNA. This chain is Small ribosomal subunit protein uS17, found in Azoarcus sp. (strain BH72).